Here is a 159-residue protein sequence, read N- to C-terminus: 2-C-methyl-D-erythritol 2,4-cyclodiphosphate synthase (159 aa).

A divalent metal cation contacts are provided by D10 and H12. Residues 10–12 (DVH) and 36–37 (HS) contribute to the 4-CDP-2-C-methyl-D-erythritol 2-phosphate site. A divalent metal cation is bound at residue H44. 4-CDP-2-C-methyl-D-erythritol 2-phosphate-binding positions include 58–60 (DIG), 63–67 (FSDTD), and R144.

The protein belongs to the IspF family. As to quaternary structure, homotrimer. It depends on a divalent metal cation as a cofactor.

It catalyses the reaction 4-CDP-2-C-methyl-D-erythritol 2-phosphate = 2-C-methyl-D-erythritol 2,4-cyclic diphosphate + CMP. The protein operates within isoprenoid biosynthesis; isopentenyl diphosphate biosynthesis via DXP pathway; isopentenyl diphosphate from 1-deoxy-D-xylulose 5-phosphate: step 4/6. Involved in the biosynthesis of isopentenyl diphosphate (IPP) and dimethylallyl diphosphate (DMAPP), two major building blocks of isoprenoid compounds. Catalyzes the conversion of 4-diphosphocytidyl-2-C-methyl-D-erythritol 2-phosphate (CDP-ME2P) to 2-C-methyl-D-erythritol 2,4-cyclodiphosphate (ME-CPP) with a corresponding release of cytidine 5-monophosphate (CMP). This Paraburkholderia phytofirmans (strain DSM 17436 / LMG 22146 / PsJN) (Burkholderia phytofirmans) protein is 2-C-methyl-D-erythritol 2,4-cyclodiphosphate synthase.